The following is a 387-amino-acid chain: Alpha-sarcoglycan (387 aa).

Positions 1–24 (MAAAALLWLPLLVGCLAGPGGTEA) are cleaved as a signal peptide. Residues 25–290 (QQTTLYPLVG…ATARDFLADA (266 aa)) are Extracellular-facing. N-linked (GlcNAc...) asparagine glycans are attached at residues N174 and N246. Residues 291–311 (LVTLLVPLLVALLLALLLAYI) traverse the membrane as a helical segment. At 312-387 (MCCRREGRLK…AQVPLILDQH (76 aa)) the chain is on the cytoplasmic side. S377 carries the phosphoserine modification.

It belongs to the sarcoglycan alpha/epsilon family. In terms of assembly, cross-link to form 2 major subcomplexes: one consisting of SGCB, SGCD and SGCG and the other consisting of SGCB and SGCD. The association between SGCB and SGCG is particularly strong while SGCA is loosely associated with the other sarcoglycans. Interacts with the syntrophin SNTA1.

The protein localises to the cell membrane. Its subcellular location is the sarcolemma. It is found in the cytoplasm. The protein resides in the cytoskeleton. Its function is as follows. Component of the sarcoglycan complex, a subcomplex of the dystrophin-glycoprotein complex which forms a link between the F-actin cytoskeleton and the extracellular matrix. The protein is Alpha-sarcoglycan (SGCA) of Oryctolagus cuniculus (Rabbit).